We begin with the raw amino-acid sequence, 1113 residues long: uncharacterized protein (1113 aa).

313–320 contributes to the ATP binding site; sequence GPPGTGKS.

It belongs to the DNA2/NAM7 helicase family.

This is an uncharacterized protein from Mycoplasma genitalium (strain ATCC 33530 / DSM 19775 / NCTC 10195 / G37) (Mycoplasmoides genitalium).